The primary structure comprises 254 residues: MSEQQKTNEAAQTLDGWYALHDFRTMDWSAWKMLSSDERQIIISEFTGLLEKWGAAQKEGNGSHTLYSIVGQKADFMLMILRPTMEELNQIELEFNKSKLAEYTIPAYSYVSVVELSNYMGSGDGDPYENPQVRARLYPELPDAKYVCFYPMDKRRSGDDNWYMLSMEERRNLMRSHGMIGRGYAGKVKQIITGSIGFDDYEWGVTLFSDDVLQFKKLVYEMRFDEVSARYGEFGSFFVGNRLAKEQLPAFLHV.

Residues Arg136, Tyr150–Lys154, His177, Gln190, and Ser228 each bind Fe-coproporphyrin III. Tyr150 is a catalytic residue.

This sequence belongs to the ChdC family. Type 1 subfamily. Requires Fe-coproporphyrin III as cofactor.

The catalysed reaction is Fe-coproporphyrin III + 2 H2O2 + 2 H(+) = heme b + 2 CO2 + 4 H2O. It catalyses the reaction Fe-coproporphyrin III + H2O2 + H(+) = harderoheme III + CO2 + 2 H2O. The enzyme catalyses harderoheme III + H2O2 + H(+) = heme b + CO2 + 2 H2O. It participates in porphyrin-containing compound metabolism; protoheme biosynthesis. Involved in coproporphyrin-dependent heme b biosynthesis. Catalyzes the decarboxylation of Fe-coproporphyrin III (coproheme) to heme b (protoheme IX), the last step of the pathway. The reaction occurs in a stepwise manner with a three-propionate intermediate. The protein is Coproheme decarboxylase of Bacillus licheniformis (strain ATCC 14580 / DSM 13 / JCM 2505 / CCUG 7422 / NBRC 12200 / NCIMB 9375 / NCTC 10341 / NRRL NRS-1264 / Gibson 46).